A 521-amino-acid chain; its full sequence is Glucose-6-phosphate isomerase (521 aa).

Glu327 serves as the catalytic Proton donor. Active-site residues include His358 and Lys486.

It belongs to the GPI family.

Its subcellular location is the cytoplasm. It carries out the reaction alpha-D-glucose 6-phosphate = beta-D-fructose 6-phosphate. It functions in the pathway carbohydrate biosynthesis; gluconeogenesis. Its pathway is carbohydrate degradation; glycolysis; D-glyceraldehyde 3-phosphate and glycerone phosphate from D-glucose: step 2/4. In terms of biological role, catalyzes the reversible isomerization of glucose-6-phosphate to fructose-6-phosphate. The polypeptide is Glucose-6-phosphate isomerase (Bordetella petrii (strain ATCC BAA-461 / DSM 12804 / CCUG 43448)).